A 133-amino-acid polypeptide reads, in one-letter code: Small ribosomal subunit protein uS8 (133 aa).

The protein belongs to the universal ribosomal protein uS8 family. In terms of assembly, part of the 30S ribosomal subunit. Contacts proteins S5 and S12.

One of the primary rRNA binding proteins, it binds directly to 16S rRNA central domain where it helps coordinate assembly of the platform of the 30S subunit. The protein is Small ribosomal subunit protein uS8 of Chlamydia pneumoniae (Chlamydophila pneumoniae).